The sequence spans 366 residues: uncharacterized protein (366 aa).

Positions Gln199–Asp267 are disordered.

This is an uncharacterized protein from Haemophilus influenzae (strain ATCC 51907 / DSM 11121 / KW20 / Rd).